We begin with the raw amino-acid sequence, 400 residues long: Selection and upkeep of intraepithelial T-cells protein 2 (400 aa).

Positions 1-21 (MGATGVLLCVVLHFLQMVTQS) are cleaved as a signal peptide. At 22–240 (SEKFTVTGLQ…LSGELFSWKR (219 aa)) the chain is on the extracellular side. One can recognise an Ig-like V-type domain in the interval 23 to 133 (EKFTVTGLQR…VGEFYEEHIT (111 aa)). 2 disulfide bridges follow: Cys-46–Cys-120 and Cys-160–Cys-214. One can recognise an Ig-like C1-type domain in the interval 139-225 (ATSSVMYILM…LQNLLTHQEE (87 aa)). A glycan (N-linked (GlcNAc...) asparagine) is linked at Asn-197. Residues 241-261 (VWIMILTTIGFMMIAFCMTYC) form a helical membrane-spanning segment. Topologically, residues 262 to 280 (VQQHLLYGTFSKGKCHWLK) are cytoplasmic. Residues 281–301 (STMIFMFSVIAVTGVMLILHL) traverse the membrane as a helical segment. At 302-321 (KQRVPVSDQHFELDTLWLED) the chain is on the extracellular side. Residues 322-342 (ISVILCVLIVFIIKLISFIYF) traverse the membrane as a helical segment. The Cytoplasmic segment spans residues 343–400 (RLEGDHQGWSLPPYLSATPTAAICRLAVPEYSRGHLQLDSEDDLAGMGPSPFFITPCF).

Belongs to the SKINT family. In terms of tissue distribution, expressed in skin, thymus and mammary gland.

Its subcellular location is the membrane. May act by engaging a cell surface molecule on immature T-cells in the embryonic thymus. In Mus musculus (Mouse), this protein is Selection and upkeep of intraepithelial T-cells protein 2 (Skint2).